The following is a 584-amino-acid chain: DNA ligase (584 aa).

Glu-249 contacts ATP. Residue Lys-251 is the N6-AMP-lysine intermediate of the active site. Positions 256, 271, 301, 341, 416, and 422 each coordinate ATP.

Belongs to the ATP-dependent DNA ligase family. It depends on Mg(2+) as a cofactor.

It carries out the reaction ATP + (deoxyribonucleotide)n-3'-hydroxyl + 5'-phospho-(deoxyribonucleotide)m = (deoxyribonucleotide)n+m + AMP + diphosphate.. Its function is as follows. DNA ligase that seals nicks in double-stranded DNA during DNA replication, DNA recombination and DNA repair. This Pyrobaculum arsenaticum (strain DSM 13514 / JCM 11321 / PZ6) protein is DNA ligase.